Consider the following 159-residue polypeptide: Phosphopantetheine adenylyltransferase (159 aa).

S10 is a binding site for substrate. Residues S10 to F11 and H18 each bind ATP. Positions 42, 77, and 91 each coordinate substrate. ATP-binding positions include G92–R94, E102, and N126–S132.

The protein belongs to the bacterial CoaD family. Homohexamer. It depends on Mg(2+) as a cofactor.

It is found in the cytoplasm. The enzyme catalyses (R)-4'-phosphopantetheine + ATP + H(+) = 3'-dephospho-CoA + diphosphate. Its pathway is cofactor biosynthesis; coenzyme A biosynthesis; CoA from (R)-pantothenate: step 4/5. Its function is as follows. Reversibly transfers an adenylyl group from ATP to 4'-phosphopantetheine, yielding dephospho-CoA (dPCoA) and pyrophosphate. This is Phosphopantetheine adenylyltransferase from Leifsonia xyli subsp. xyli (strain CTCB07).